A 608-amino-acid chain; its full sequence is Rap1 GTPase-GDP dissociation stimulator 1 (608 aa).

2 ARM repeats span residues 89–131 (GLIS…DQAG) and 171–212 (DSLQ…NLAE). A prevents binding to prenylated RHOA region spans residues 122–171 (EGRSAVDQAGGAQIVVDHLRSLCSKTDPASEKLLTVFCGMLMNYSNEKND). Lys-231 carries the post-translational modification N6-acetyllysine. ARM repeat units lie at residues 348 to 391 (DGNC…NLAI), 392 to 432 (PVVN…MLID), and 480 to 520 (SKDV…LIAA).

As to quaternary structure, interacts with RABL3. Interacts with RHOT1. In terms of assembly, interacts with unprenylated RHOA; the interaction is direct. Interacts with RAP1A. Interacts with KRAS. Interacts with RAC1. Interacts with RAP1B. Preferentially interacts with unprenylated GTPases that will become geranylgeranylated. May also interact with prenylated GTPases. Interacts with prenylated RHOA; the interaction is direct and in a 1:1 stoichiometry. Interacts with RAP1A. Interacts with KRAS. Interacts with RAC1. Interacts with RAP1B. Preferentially interacts with prenylated GTPases. Post-translationally, the N-terminus is blocked. In terms of processing, forms covalent cross-links mediated by transglutaminase TGM2, between a glutamine and the epsilon-amino group of a lysine residue, forming homopolymers and heteropolymers. As to expression, brain.

It is found in the cytoplasm. It localises to the cytosol. The protein resides in the endoplasmic reticulum. Its subcellular location is the mitochondrion. The protein localises to the nucleus. Its function is as follows. Acts as a GEF (guanine nucleotide exchange factor) for the Rho family of small GTP-binding proteins (G proteins) that stimulates the dissociation of GDP to enable subsequent binding of GTP. Additionally, appears to chaperone the processing and/or trafficking of small GTPases containing a C-terminal polybasic region independently of GEF activity. Targets include RAP1A/RAP1B, RHOA, RHOB, RHOC, RAC1 and KRAS. Regulates mitochondrial dynamics by controlling RHOT function to promote mitochondrial fission during high calcium conditions. Able to promote the Ca(2+) release from the endoplasmic reticulum via both inositol trisphosphate (Ins3P) and ryanodine sensitive receptors leading to a enhanced mitochondrial Ca(2+) uptake. In terms of biological role, acts as a GEF (guanine nucleotide exchange factor) for unprenylated RHOA. Chaperones the entry and passage of small GTPases through the prenylation pathway. Recognizes the last amino acid in the GTPase C-terminal CAAX motif with a preference for 'Leu' over 'Met', indicating involvement in the geranylgeranylation pathway. May also recognize prenylated GTPases. Functionally, acts as a GEF (guanine nucleotide exchange factor) for prenylated RHOA. Acts as a GEF for RHOC. Chaperones the downstream trafficking and/or processing of small newly prenylated GTPases. Escorts RAC1 to the nucleus. In Bos taurus (Bovine), this protein is Rap1 GTPase-GDP dissociation stimulator 1 (RAP1GDS1).